Here is a 377-residue protein sequence, read N- to C-terminus: MEEPEEQPPHEADTEPVVTSGASEAVPRVLPGDPQNLSDVDAFNLLLEMKLKRRRERPNLPHTVTELVAEDGSRVYVVGTAHFSDDSKRDVVKTIREVQPDVVVVELCQYRVSMLKMDERTLLREAKEISLEKLQQAIRQNGVASGLMQMLLLKVSAHITEQLGVAPGGEFREAFKEASRVPFCKFHLGDRPIPVTFKRAIAALSLWQKVKLAWGLCFLSDPISKDDVERCKQKDLLEQMMAEMVGEFPDLHRTIVSERDVYLTYMLRQAARRLELPRASDAEPRKCVPSVVVGVVGMGHVPGIEKNWTTDLNIQEIMTVPPPSASGRVSRLAVKAAALGLLGYGLYWTGRRAVSLLLALPAARHCLQRLSDAWPQK.

At Met1 the chain carries N-acetylmethionine. A disordered region spans residues 1-34 (MEEPEEQPPHEADTEPVVTSGASEAVPRVLPGDP). Thr65 is subject to Phosphothreonine.

This chain is TraB domain-containing protein (TRABD), found in Bos taurus (Bovine).